The sequence spans 426 residues: MPLLWLRGFLLASCWIIVRSSPTPGSEGHSAAPDCPSCALAALPKDVPNSQPEMVEAVKKHILNMLHLKKRPDVTQPVPKAALLNAIRKLHVGKVGENGYVEIEDDIGRRAEMNELMEQTSEIITFAESGTARKTLHFEISKEGSDLSVVERAEVWLFLKVPKANRTRTKVTIRLFQQQKHPQGSLDTGEEAEEVGLKGERSELLLSEKVVDARKSTWHVFPVSSSIQRLLDQGKSSLDVRIACEQCQESGASLVLLGKKKKKEEEGEGKKKGGGEGGAGADEEKEQSHRPFLMLQARQSEDHPHRRRRRGLECDGKVNICCKKQFFVSFKDIGWNDWIIAPSGYHANYCEGECPSHIAGTSGSSLSFHSTVINHYRMRGHSPFANLKSCCVPTKLRPMSMLYYDDGQNIIKKDIQNMIVEECGCS.

The first 20 residues, 1 to 20, serve as a signal peptide directing secretion; sequence MPLLWLRGFLLASCWIIVRS. The propeptide occupies 21–310; that stretch reads SPTPGSEGHS…EDHPHRRRRR (290 aa). The N-linked (GlcNAc...) asparagine glycan is linked to Asn165. The interval 259-288 is disordered; the sequence is KKKKKEEEGEGKKKGGGEGGAGADEEKEQS. A compositionally biased stretch (basic and acidic residues) spans 263-274; the sequence is KEEEGEGKKKGG. 4 cysteine pairs are disulfide-bonded: Cys314–Cys322, Cys321–Cys391, Cys350–Cys423, and Cys354–Cys425.

This sequence belongs to the TGF-beta family. Dimeric, linked by one or more disulfide bonds. Inhibin A is a dimer of alpha/INHA and beta-A/INHBA. Activin A is a homodimer of beta-A/INHBA. Activin AB is a dimer of beta-A/INHBA and beta-B/INHBB. Interacts with FST and FSTL3; these interactions prevent activin A interaction to its type II receptor. Activin A interacts with ACVR2A. Activin A interacts with BMPR2. Inhibin A interacts with ACVR1; this interaction creates a non-signaling complex (NSC) that inhibits ACVR1-mediated BMP signaling. Inhibin A interacts with ACVR2A.

The protein localises to the secreted. In terms of biological role, inhibins/activins are involved in regulating a number of diverse functions such as hypothalamic and pituitary hormone secretion, gonadal hormone secretion, germ cell development and maturation, erythroid differentiation, insulin secretion, nerve cell survival, embryonic axial development or bone growth, depending on their subunit composition. Activin A is a homodimer of INHBA that plays a role in several essential biological processes including embryonic development, stem cell maintenance and differentiation, haematopoiesis, cell proliferation and tissue fibrosis. Signals through type I (such as ACVR1B or ACVR1C) and type II receptors (such as ACVR2A, ACVR2B or BMPR2) which, upon ligand binding, phosphorylate SMAD2 and SMAD3 intracellular signaling mediators that form a complex with SMAD4, translocate to the nucleus and modulate gene expression. Can also activate alternative non-canonical intracellular signaling pathways including the p38 MAPK, extracellular signal-regulated kinases 1/2 (ERK1/2) and c-Jun N-terminal kinases (JNKs) to modulate cell migration and differentiation. Alternatively, promotes osteoblastic differentiation via ACVRL1-SMAD1/5/9 pathway. In addition, can engage the type I receptor ACVR1 to form an ACVR1-activin A-type II receptor non-signaling complex (NSC) that renders receptors unavailable for engagement with BMPs, hence resulting in an apparent inhibition of ACVR1-mediated BMP signaling. Its function is as follows. Inhibin A is a dimer of alpha/INHA and beta-A/INHBA that functions as a feedback regulator in the hypothalamic-pituitary-gonadal (HPG) axis. Inhibits the secretion of FSH from the anterior pituitary gland by acting on pituitary gonadotrope cells. Antagonizes activin A by binding to the proteoglycan, betaglycan, and forming a stable complex with and, thereby, sequestering type II activin receptors while excluding type I receptor. This Homo sapiens (Human) protein is Inhibin beta A chain (INHBA).